The primary structure comprises 430 residues: MTTLTLNTSLLSSCRILAAFSGGLDSTVLLHQLVLWRERHPDVTLRAIHIHHGLSPHADSWVRHCETVCERWQVPLVVERMTLADNGLGIEAHAREARYRAFAQTLLPGEVLATAQHLDDQCETFLLALKRGSGPAGLSAMGERSPFAGTLLLRPLLRETRKTLEQWAVRHGLCWIEDESNQDDAYDRNFLRLRALPLLQRRWPHFPAAVARSATLCAEQERLLDELLASDLTDCITAEGTLRLSPLMLMSDVRRAAILRRWLAMRNAPMPSRDALERIWQEVALARDDASPCLRFGDHEIRRYQSQLWWIKSVAGQHETTVVWPVWQTPLALPAGLGTVQLVPGGELRRPREEESVSIRFKAPGVLHIVGRNGGRKLKKIWQEQGIPPWRRDTTPLLFYGETLIAAAGVFVTREGAAEDKEGVSLVWHA.

21–26 (SGGLDS) serves as a coordination point for ATP.

Belongs to the tRNA(Ile)-lysidine synthase family.

It is found in the cytoplasm. The enzyme catalyses cytidine(34) in tRNA(Ile2) + L-lysine + ATP = lysidine(34) in tRNA(Ile2) + AMP + diphosphate + H(+). Ligates lysine onto the cytidine present at position 34 of the AUA codon-specific tRNA(Ile) that contains the anticodon CAU, in an ATP-dependent manner. Cytidine is converted to lysidine, thus changing the amino acid specificity of the tRNA from methionine to isoleucine. This Salmonella paratyphi A (strain ATCC 9150 / SARB42) protein is tRNA(Ile)-lysidine synthase.